A 179-amino-acid polypeptide reads, in one-letter code: Ubiquinol-cytochrome c reductase iron-sulfur subunit (179 aa).

Residues 14 to 35 (FLYVATAAVGAAGVAAVAWPFI) form a helical membrane-spanning segment. The Rieske domain maps to 80–173 (AKEIQSEEAA…YEFVDNTKIR (94 aa)). [2Fe-2S] cluster-binding residues include C118, H120, C137, and H140. Residues C123 and C139 are joined by a disulfide bond.

The protein belongs to the Rieske iron-sulfur protein family. As to quaternary structure, the main subunits of complex b-c1 are: cytochrome b, cytochrome c1 and the Rieske protein. It depends on [2Fe-2S] cluster as a cofactor.

The protein resides in the cell membrane. The catalysed reaction is a quinol + 2 Fe(III)-[cytochrome c](out) = a quinone + 2 Fe(II)-[cytochrome c](out) + 2 H(+)(out). Functionally, component of the ubiquinol-cytochrome c reductase complex (complex III or cytochrome b-c1 complex), which is a respiratory chain that generates an electrochemical potential coupled to ATP synthesis. In Blastochloris viridis (Rhodopseudomonas viridis), this protein is Ubiquinol-cytochrome c reductase iron-sulfur subunit (petA).